Here is a 261-residue protein sequence, read N- to C-terminus: Cytosolic Fe-S cluster assembly factor Nubp2 homolog (261 aa).

Residue 14-21 (GKGGVGKS) participates in ATP binding. [4Fe-4S] cluster-binding residues include Cys-188 and Cys-191.

This sequence belongs to the Mrp/NBP35 ATP-binding proteins family. NUBP2/CFD1 subfamily. Heterotetramer of 2 Nubp1 and 2 Nubp2 chains. The cofactor is [4Fe-4S] cluster.

It localises to the cytoplasm. Its function is as follows. Component of the cytosolic iron-sulfur (Fe/S) protein assembly (CIA) machinery. Required for maturation of extramitochondrial Fe-S proteins. The Nubp1-Nubp2 heterotetramer forms a Fe-S scaffold complex, mediating the de novo assembly of an Fe-S cluster and its transfer to target apoproteins. This chain is Cytosolic Fe-S cluster assembly factor Nubp2 homolog, found in Drosophila ananassae (Fruit fly).